We begin with the raw amino-acid sequence, 316 residues long: ATP synthase gamma chain (316 aa).

This sequence belongs to the ATPase gamma chain family. In terms of assembly, F-type ATPases have 2 components, CF(1) - the catalytic core - and CF(0) - the membrane proton channel. CF(1) has five subunits: alpha(3), beta(3), gamma(1), delta(1), epsilon(1). CF(0) has three main subunits: a, b and c.

The protein resides in the cellular thylakoid membrane. Produces ATP from ADP in the presence of a proton gradient across the membrane. The gamma chain is believed to be important in regulating ATPase activity and the flow of protons through the CF(0) complex. This Prochlorococcus marinus (strain MIT 9215) protein is ATP synthase gamma chain.